Consider the following 507-residue polypeptide: ATP synthase subunit alpha, chloroplastic (507 aa).

Residue 170–177 (GDRQTGKT) participates in ATP binding. Thr-257 is subject to Phosphothreonine.

This sequence belongs to the ATPase alpha/beta chains family. In terms of assembly, F-type ATPases have 2 components, CF(1) - the catalytic core - and CF(0) - the membrane proton channel. CF(1) has five subunits: alpha(3), beta(3), gamma(1), delta(1), epsilon(1). CF(0) has four main subunits: a, b, b' and c.

The protein resides in the plastid. It localises to the chloroplast thylakoid membrane. It catalyses the reaction ATP + H2O + 4 H(+)(in) = ADP + phosphate + 5 H(+)(out). In terms of biological role, produces ATP from ADP in the presence of a proton gradient across the membrane. The alpha chain is a regulatory subunit. The polypeptide is ATP synthase subunit alpha, chloroplastic (Aethionema grandiflorum (Persian stone-cress)).